Reading from the N-terminus, the 89-residue chain is Bacterial microcompartment shell vertex protein GrpN (89 aa).

The 83-residue stretch at 1–83 folds into the BMV domain; it reads MYLGKVIGTV…IDAAVVGIVD (83 aa).

This sequence belongs to the CcmL/EutN family. As to quaternary structure, homopentamer with a small central pore.

The protein resides in the bacterial microcompartment. In terms of biological role, probably forms vertices in the bacterial microcompartment (BMC) predicted to be involved in glycyl radical-based 1,2-propanediol metabolism in this organism. In Rhodospirillum rubrum (strain F11), this protein is Bacterial microcompartment shell vertex protein GrpN.